The following is a 385-amino-acid chain: MSIIRSERYSAIFLLCSAALAIIFANVLDPDTWHAVHSAVSEYHIFGLITPHDIVADFLLAVFFFAVAIELKHELVKGELSSFSKAIIPGVCAAGGILVPISIYLSVASVLPNGWPVPTATDVAFSLGILAIFGSSLPSKVRIFLLALAVLDDLAGIVIIATAFSVSISYWWIIVACITVGLFGFCSYRLARCKTSKTFLIIPAMLLCALAAWVSVYQSGIHATIAGVMLGIMLNRKQGAAIEHALEPYINGIILPAFAFLAAMVRVPHLPLDEISPALWGILLGLLFGKLLGISVFGIIALKFFRKKSISFFNLLVVSALGGIGFTVSLLMNELAFLGTPVHEQGVIAVLIGSLLSAILAIILMRCYKGRKSKSLPGTKGRVSH.

11 helical membrane passes run 9 to 29 (YSAIFLLCSAALAIIFANVLD), 45 to 65 (IFGLITPHDIVADFLLAVFFF), 87 to 107 (IIPGVCAAGGILVPISIYLSV), 114 to 134 (GWPVPTATDVAFSLGILAIFG), 155 to 175 (AGIVIIATAFSVSISYWWIIV), 198 to 218 (TFLIIPAMLLCALAAWVSVYQ), 220 to 235 (GIHATIAGVMLGIMLN), 245 to 265 (ALEPYINGIILPAFAFLAAMV), 282 to 302 (ILLGLLFGKLLGISVFGIIAL), 312 to 332 (FFNLLVVSALGGIGFTVSLLM), and 345 to 365 (QGVIAVLIGSLLSAILAIILM).

Belongs to the NhaA Na(+)/H(+) (TC 2.A.33) antiporter family.

It localises to the cell membrane. The enzyme catalyses Na(+)(in) + 2 H(+)(out) = Na(+)(out) + 2 H(+)(in). Its function is as follows. Na(+)/H(+) antiporter that extrudes sodium in exchange for external protons. The sequence is that of Na(+)/H(+) antiporter NhaA from Tropheryma whipplei (strain Twist) (Whipple's bacillus).